The sequence spans 102 residues: S-phase delaying protein 2 (102 aa).

The interval 43-62 (FPSYHKDQTDRNELPQQKHD) is disordered. Residues 46–62 (YHKDQTDRNELPQQKHD) show a composition bias toward basic and acidic residues.

Belongs to the DIF1/spd1 family.

The protein localises to the cytoplasm. Its subcellular location is the nucleus. In terms of biological role, regulates the ribonucleotide reductase activity. The sequence is that of S-phase delaying protein 2 (spd2) from Schizosaccharomyces pombe (strain 972 / ATCC 24843) (Fission yeast).